The primary structure comprises 113 residues: MGNYHVTLQASYIAKNVEDVEDAIGVAISQIGKLLNKGSLDYVDIDVGLTICPKCGEPIDCVLVVAKTAIVGILLSMKVFNAESPEHAVRIAKSSIGRALKDIPLEDVDVVEI.

This sequence belongs to the UPF0212 family.

This Methanococcus maripaludis (strain C6 / ATCC BAA-1332) protein is UPF0212 protein MmarC6_1165.